A 380-amino-acid chain; its full sequence is Large ribosomal subunit protein mL38 (380 aa).

The N-terminal 26 residues, 1–26 (MAAPWWRAAFSVTGRCRGISTSASLS), are a transit peptide targeting the mitochondrion. Positions 98 to 123 (SRTQKLQERKRFLQELRANSEEERAA) form a coiled coil.

Belongs to the phosphatidylethanolamine-binding protein family. Mitochondrion-specific ribosomal protein mL38 subfamily. As to quaternary structure, component of the mitochondrial ribosome large subunit (39S) which comprises a 16S rRNA and about 50 distinct proteins.

The protein localises to the mitochondrion. This Rattus norvegicus (Rat) protein is Large ribosomal subunit protein mL38 (Mrpl38).